A 929-amino-acid chain; its full sequence is Urea transporter 2 (929 aa).

The segment covering 1–11 has biased composition (basic and acidic residues); it reads MSDHPLKEMSD. The tract at residues 1-89 is disordered; it reads MSDHPLKEMS…KRRESELPRR (89 aa). Low complexity predominate over residues 31 to 42; the sequence is SELSSPTWPSSS. Positions 55-88 are enriched in basic and acidic residues; it reads PEEKDLRSSDEDSHIVKIEKPNERSKRRESELPR. The next 9 membrane-spanning stretches (helical) occupy residues 133–155, 162–179, 184–204, 212–232, 241–261, 310–330, 349–371, 378–399, and 400–420; these read GAAQ…GLLI, IAGA…LALS, AIAS…VAVF, WWLL…SSAL, LPVF…ATGH, GGVI…HAAI, IYTG…MFYV, LLAL…NMMA, and VVGV…FLLL. Residues 451-480 form a disordered region; the sequence is SDEQKPPNGGGGEQSHGGGQRKAEEGSETV. Over residues 458–470 the composition is skewed to gly residues; that stretch reads NGGGGEQSHGGGQ. Phosphoserine is present on Ser-486. Transmembrane regions (helical) follow at residues 609–629, 647–667, 675–695, and 704–724; these read GILI…SGCL, AIAA…MAVF, WWLL…SSAL, and LPVF…ATGH. The N-linked (GlcNAc...) asparagine glycan is linked to Asn-742. 4 consecutive transmembrane segments (helical) span residues 773–793, 812–832, 841–861, and 863–883; these read GGIF…HAAI, IYFG…GGMF, LLAI…ANML, and VFGL…FLLL.

The protein belongs to the urea transporter family. Interacts with SNAPIN which enhances its urea transport activity. Expressed in the inner medulla of the kidney. As to expression, expressed in both the inner and outer renal medulla of the kidney.

Its subcellular location is the apical cell membrane. It is found in the cell membrane. The catalysed reaction is urea(in) = urea(out). Inhibited by phloretin. Activated by vasopressin, forskolin, 3-isobutyl-1-methylxanthine (IBMX) and cAMP. Its activity is regulated as follows. Inhibited by phloretin. With respect to regulation, inhibited by urea analogs and phloretin and activated by forskolin. Inhibited by phloretin and activated by forskolin. Functionally, mediates the transport of urea driven by a concentration gradient across the cell membrane of the kidney inner medullary collecting duct which is critical to the urinary concentrating mechanism. In Rattus norvegicus (Rat), this protein is Urea transporter 2 (Slc14a2).